The following is an 88-amino-acid chain: Small ribosomal subunit protein bS20 (88 aa).

Positions 1 to 27 are disordered; it reads MANSKSAKKRALQSEKRRQHNASRRSM.

Belongs to the bacterial ribosomal protein bS20 family.

Its function is as follows. Binds directly to 16S ribosomal RNA. The protein is Small ribosomal subunit protein bS20 of Shewanella putrefaciens (strain CN-32 / ATCC BAA-453).